The primary structure comprises 284 residues: 4-diphosphocytidyl-2-C-methyl-D-erythritol kinase (284 aa).

The active site involves lysine 14. Residue 98 to 108 coordinates ATP; the sequence is PMGGGLGGGSS. Residue aspartate 140 is part of the active site.

It belongs to the GHMP kinase family. IspE subfamily.

It carries out the reaction 4-CDP-2-C-methyl-D-erythritol + ATP = 4-CDP-2-C-methyl-D-erythritol 2-phosphate + ADP + H(+). It participates in isoprenoid biosynthesis; isopentenyl diphosphate biosynthesis via DXP pathway; isopentenyl diphosphate from 1-deoxy-D-xylulose 5-phosphate: step 3/6. Catalyzes the phosphorylation of the position 2 hydroxy group of 4-diphosphocytidyl-2C-methyl-D-erythritol. The sequence is that of 4-diphosphocytidyl-2-C-methyl-D-erythritol kinase from Shewanella pealeana (strain ATCC 700345 / ANG-SQ1).